The following is a 61-amino-acid chain: Probable tautomerase spyM18_1099 (61 aa).

Pro-2 functions as the Proton acceptor; via imino nitrogen in the catalytic mechanism.

The protein belongs to the 4-oxalocrotonate tautomerase family.

The chain is Probable tautomerase spyM18_1099 from Streptococcus pyogenes serotype M18 (strain MGAS8232).